The following is a 234-amino-acid chain: Aspartate/glutamate leucyltransferase (234 aa).

It belongs to the R-transferase family. Bpt subfamily.

The protein resides in the cytoplasm. It carries out the reaction N-terminal L-glutamyl-[protein] + L-leucyl-tRNA(Leu) = N-terminal L-leucyl-L-glutamyl-[protein] + tRNA(Leu) + H(+). The enzyme catalyses N-terminal L-aspartyl-[protein] + L-leucyl-tRNA(Leu) = N-terminal L-leucyl-L-aspartyl-[protein] + tRNA(Leu) + H(+). Its function is as follows. Functions in the N-end rule pathway of protein degradation where it conjugates Leu from its aminoacyl-tRNA to the N-termini of proteins containing an N-terminal aspartate or glutamate. The sequence is that of Aspartate/glutamate leucyltransferase from Hahella chejuensis (strain KCTC 2396).